The sequence spans 326 residues: Acetyl-coenzyme A carboxylase carboxyl transferase subunit beta (326 aa).

Residues 32–301 enclose the CoA carboxyltransferase N-terminal domain; the sequence is LWTKCPACGV…ILPPLNADSN (270 aa). Residues Cys-36, Cys-39, Cys-55, and Cys-58 each coordinate Zn(2+). The C4-type zinc finger occupies 36–58; sequence CPACGVLTYTKDLQGNWMVCVEC.

It belongs to the AccD/PCCB family. In terms of assembly, acetyl-CoA carboxylase is a heterohexamer composed of biotin carboxyl carrier protein (AccB), biotin carboxylase (AccC) and two subunits each of ACCase subunit alpha (AccA) and ACCase subunit beta (AccD). The cofactor is Zn(2+).

It localises to the cytoplasm. It carries out the reaction N(6)-carboxybiotinyl-L-lysyl-[protein] + acetyl-CoA = N(6)-biotinyl-L-lysyl-[protein] + malonyl-CoA. It participates in lipid metabolism; malonyl-CoA biosynthesis; malonyl-CoA from acetyl-CoA: step 1/1. Component of the acetyl coenzyme A carboxylase (ACC) complex. Biotin carboxylase (BC) catalyzes the carboxylation of biotin on its carrier protein (BCCP) and then the CO(2) group is transferred by the transcarboxylase to acetyl-CoA to form malonyl-CoA. The protein is Acetyl-coenzyme A carboxylase carboxyl transferase subunit beta of Synechocystis sp. (strain ATCC 27184 / PCC 6803 / Kazusa).